Consider the following 351-residue polypeptide: Protein FAM118B (351 aa).

An N-acetylalanine modification is found at Ala2. Ser9 is subject to Phosphoserine.

The protein belongs to the FAM118 family.

The protein resides in the nucleus. Its subcellular location is the cajal body. Its function is as follows. May play a role in Cajal bodies formation. This chain is Protein FAM118B (FAM118B), found in Homo sapiens (Human).